The chain runs to 404 residues: NADH-quinone oxidoreductase subunit D 2 (404 aa).

Belongs to the complex I 49 kDa subunit family. NDH-1 is composed of 14 different subunits. Subunits NuoB, C, D, E, F, and G constitute the peripheral sector of the complex.

The protein localises to the cell inner membrane. The catalysed reaction is a quinone + NADH + 5 H(+)(in) = a quinol + NAD(+) + 4 H(+)(out). Its function is as follows. NDH-1 shuttles electrons from NADH, via FMN and iron-sulfur (Fe-S) centers, to quinones in the respiratory chain. The immediate electron acceptor for the enzyme in this species is believed to be ubiquinone. Couples the redox reaction to proton translocation (for every two electrons transferred, four hydrogen ions are translocated across the cytoplasmic membrane), and thus conserves the redox energy in a proton gradient. This Rhizobium meliloti (strain 1021) (Ensifer meliloti) protein is NADH-quinone oxidoreductase subunit D 2.